We begin with the raw amino-acid sequence, 233 residues long: Antiholin-like protein LrgB (233 aa).

7 consecutive transmembrane segments (helical) span residues 9–29, 34–54, 63–83, 97–117, 121–141, 144–164, and 212–232; these read TPYF…ILFE, FFLF…LYLT, IGGD…AIPL, IIGG…TFAK, FAND…IALP, AGIG…GVII, and IALV…VAIF.

The protein belongs to the CidB/LrgB family. LrgB subfamily.

It is found in the cell membrane. Functionally, inhibits the expression or activity of extracellular murein hydrolases by interacting, possibly with LrgA, with the holin-like proteins CidA and/or CidB. The LrgAB and CidAB proteins may affect the proton motive force of the membrane. May be involved in programmed cell death (PCD), possibly triggering PCD in response to antibiotics and environmental stresses. The polypeptide is Antiholin-like protein LrgB (Staphylococcus aureus (strain Mu3 / ATCC 700698)).